The following is a 362-amino-acid chain: Phospho-N-acetylmuramoyl-pentapeptide-transferase (362 aa).

10 helical membrane passes run 28 to 48 (GATVTALLISFLFGPRIIALL), 73 to 93 (TPTMGGFLILVGLVPSVLLWA), 100 to 120 (VWIVLFVTLGFGAVGFADDYL), 134 to 154 (VKLFFEFVIALIAMWALVLVS), 169 to 189 (TLLIELGGFFFLFGALVIVGS), 201 to 221 (GLAIVPVMIAAASLGLIVYLV), 241 to 261 (LAVFCGALIGAGLGFLWYNAP), 264 to 284 (MVFMGDTGSLALGGALGAIAV), 290 to 310 (LVLAIIGGLFVLEAVSVIVQV), and 339 to 359 (TVVVRFWIISVVLAMAGLATL).

It belongs to the glycosyltransferase 4 family. MraY subfamily. The cofactor is Mg(2+).

The protein resides in the cell inner membrane. It carries out the reaction UDP-N-acetyl-alpha-D-muramoyl-L-alanyl-gamma-D-glutamyl-meso-2,6-diaminopimeloyl-D-alanyl-D-alanine + di-trans,octa-cis-undecaprenyl phosphate = di-trans,octa-cis-undecaprenyl diphospho-N-acetyl-alpha-D-muramoyl-L-alanyl-D-glutamyl-meso-2,6-diaminopimeloyl-D-alanyl-D-alanine + UMP. It participates in cell wall biogenesis; peptidoglycan biosynthesis. Functionally, catalyzes the initial step of the lipid cycle reactions in the biosynthesis of the cell wall peptidoglycan: transfers peptidoglycan precursor phospho-MurNAc-pentapeptide from UDP-MurNAc-pentapeptide onto the lipid carrier undecaprenyl phosphate, yielding undecaprenyl-pyrophosphoryl-MurNAc-pentapeptide, known as lipid I. In Parvibaculum lavamentivorans (strain DS-1 / DSM 13023 / NCIMB 13966), this protein is Phospho-N-acetylmuramoyl-pentapeptide-transferase.